We begin with the raw amino-acid sequence, 152 residues long: Transcriptional regulator MraZ (152 aa).

SpoVT-AbrB domains lie at 5 to 52 (HSNR…PMPE) and 81 to 124 (ATEV…DQGR).

Belongs to the MraZ family. As to quaternary structure, forms oligomers.

It localises to the cytoplasm. The protein localises to the nucleoid. The sequence is that of Transcriptional regulator MraZ from Solidesulfovibrio magneticus (strain ATCC 700980 / DSM 13731 / RS-1) (Desulfovibrio magneticus).